The chain runs to 859 residues: Kinesin-like protein KIN-14T (859 aa).

The region spanning 91 to 411 is the Kinesin motor domain; it reads NIRVFCRVKP…LNFATRAKNI (321 aa). 168–175 provides a ligand contact to ATP; sequence GQTGTGKT. The stretch at 422–463 forms a coiled coil; that stretch reads QAKKEAVMMNLQKMMEKIEQEREMSLRKMRNLNETLEKLTGK. Positions 511 to 530 are disordered; that stretch reads LSGADFSVTPNSSSFKSRRN. Polar residues predominate over residues 518 to 530; that stretch reads VTPNSSSFKSRRN.

The protein belongs to the TRAFAC class myosin-kinesin ATPase superfamily. Kinesin family. KIN-14 subfamily.

This is Kinesin-like protein KIN-14T from Arabidopsis thaliana (Mouse-ear cress).